Reading from the N-terminus, the 214-residue chain is Nucleoside triphosphate pyrophosphatase (214 aa).

Residue Asp-79 is the Proton acceptor of the active site.

The protein belongs to the Maf family. The cofactor is a divalent metal cation.

Its subcellular location is the cytoplasm. It catalyses the reaction a ribonucleoside 5'-triphosphate + H2O = a ribonucleoside 5'-phosphate + diphosphate + H(+). The enzyme catalyses a 2'-deoxyribonucleoside 5'-triphosphate + H2O = a 2'-deoxyribonucleoside 5'-phosphate + diphosphate + H(+). In terms of biological role, nucleoside triphosphate pyrophosphatase. May have a dual role in cell division arrest and in preventing the incorporation of modified nucleotides into cellular nucleic acids. The sequence is that of Nucleoside triphosphate pyrophosphatase from Rhodococcus jostii (strain RHA1).